Reading from the N-terminus, the 311-residue chain is Metal-staphylopine import system permease protein CntB (311 aa).

6 helical membrane passes run 9 to 29 (IALMFPLVIVVSFMTFLLTYI), 105 to 125 (LTIISSVMVMITSIILGVVSA), 139 to 159 (VAFFLTALPSYWIASILIIYV), 173 to 193 (GPESYILPVIVITIAYAGIYF), 237 to 257 (IFCMSIPMIMGGLVVIEYIFA), and 274 to 294 (FPVIQAYVLIVAVLFIVFNTL). The ABC transmembrane type-1 domain maps to 99–295 (FMNTLKLTII…VLFIVFNTLA (197 aa)).

Belongs to the binding-protein-dependent transport system permease family. The complex is composed of two ATP-binding proteins (CntD and CntF), two transmembrane proteins (CntB and CntC) and a solute-binding protein (CntA).

The protein resides in the cell membrane. In terms of biological role, part of the ABC transporter complex CntABCDF (Opp1) involved in the uptake of metal in complex with the metallophore staphylopine (StP). May be involved in the import of a large array of divalent metals ions such as nickel, cobalt, zinc, copper and iron. Probably responsible for the translocation of the substrate across the membrane. The sequence is that of Metal-staphylopine import system permease protein CntB from Staphylococcus aureus (strain Mu50 / ATCC 700699).